Here is a 509-residue protein sequence, read N- to C-terminus: Probable cytochrome P450 4ac3 (509 aa).

Residue cysteine 454 coordinates heme.

It belongs to the cytochrome P450 family. Heme serves as cofactor.

The protein localises to the endoplasmic reticulum membrane. The protein resides in the microsome membrane. May be involved in the metabolism of insect hormones and in the breakdown of synthetic insecticides. The polypeptide is Probable cytochrome P450 4ac3 (Cyp4ac3) (Drosophila melanogaster (Fruit fly)).